Reading from the N-terminus, the 375-residue chain is Dual-specificity RNA methyltransferase RlmN (375 aa).

Glu-98 acts as the Proton acceptor in catalysis. The Radical SAM core domain maps to 106–346; that stretch reads GGKRRTLCVS…VRTTRGDDID (241 aa). A disulfide bond links Cys-113 and Cys-349. [4Fe-4S] cluster is bound by residues Cys-120, Cys-124, and Cys-127. S-adenosyl-L-methionine-binding positions include 174–175, Ser-206, 228–230, and Asn-306; these read GE and SLH. Cys-349 serves as the catalytic S-methylcysteine intermediate.

Belongs to the radical SAM superfamily. RlmN family. It depends on [4Fe-4S] cluster as a cofactor.

Its subcellular location is the cytoplasm. It catalyses the reaction adenosine(2503) in 23S rRNA + 2 reduced [2Fe-2S]-[ferredoxin] + 2 S-adenosyl-L-methionine = 2-methyladenosine(2503) in 23S rRNA + 5'-deoxyadenosine + L-methionine + 2 oxidized [2Fe-2S]-[ferredoxin] + S-adenosyl-L-homocysteine. The enzyme catalyses adenosine(37) in tRNA + 2 reduced [2Fe-2S]-[ferredoxin] + 2 S-adenosyl-L-methionine = 2-methyladenosine(37) in tRNA + 5'-deoxyadenosine + L-methionine + 2 oxidized [2Fe-2S]-[ferredoxin] + S-adenosyl-L-homocysteine. Specifically methylates position 2 of adenine 2503 in 23S rRNA and position 2 of adenine 37 in tRNAs. m2A2503 modification seems to play a crucial role in the proofreading step occurring at the peptidyl transferase center and thus would serve to optimize ribosomal fidelity. This is Dual-specificity RNA methyltransferase RlmN from Chromohalobacter salexigens (strain ATCC BAA-138 / DSM 3043 / CIP 106854 / NCIMB 13768 / 1H11).